Here is a 554-residue protein sequence, read N- to C-terminus: Oxygen-dependent choline dehydrogenase (554 aa).

4–33 (DYIIIGAGSAGNVLATRLTEDPNTTVLLLE) provides a ligand contact to FAD. The active-site Proton acceptor is the His473.

It belongs to the GMC oxidoreductase family. The cofactor is FAD.

The enzyme catalyses choline + A = betaine aldehyde + AH2. It catalyses the reaction betaine aldehyde + NAD(+) + H2O = glycine betaine + NADH + 2 H(+). It participates in amine and polyamine biosynthesis; betaine biosynthesis via choline pathway; betaine aldehyde from choline (cytochrome c reductase route): step 1/1. Functionally, involved in the biosynthesis of the osmoprotectant glycine betaine. Catalyzes the oxidation of choline to betaine aldehyde and betaine aldehyde to glycine betaine at the same rate. This is Oxygen-dependent choline dehydrogenase from Klebsiella pneumoniae subsp. pneumoniae (strain ATCC 700721 / MGH 78578).